Reading from the N-terminus, the 355-residue chain is MKQNKRLMVMAGGTGGHVFPGLAVAKQLQEQGWEIRWLGTADRMEADLVPKHGIEIDFIKVKGLRGQGVKRLLAAPFQIINAIMQARAHMKRWQPDAVLGMGGYVSGPGGIAAWLSGIPVVLHEQNAVAGLTNQWLSKIAKKVFQAFPGAFPSAAVVGNPVREDVTQLDEPAQRMQEREGPIRILVMGGSQGARILNQTLPAVMANLGQDYCIRHQAGKGAAQEVQAAYQANNVANAEVTEFIDDVAQAYAWADLLVCRSGALTVSEVSAAGVGAIFIPFMHKDRQQALNADHLVECGAAKMIEQPDLTVESLTQQIQQLDRQALLSMAQKARSAAKLDADKVVAQAIVALTEKR.

UDP-N-acetyl-alpha-D-glucosamine contacts are provided by residues 14–16 (TGG), asparagine 126, arginine 162, serine 190, isoleucine 243, 262–267 (ALTVSE), and glutamine 287.

The protein belongs to the glycosyltransferase 28 family. MurG subfamily.

The protein localises to the cell inner membrane. The enzyme catalyses di-trans,octa-cis-undecaprenyl diphospho-N-acetyl-alpha-D-muramoyl-L-alanyl-D-glutamyl-meso-2,6-diaminopimeloyl-D-alanyl-D-alanine + UDP-N-acetyl-alpha-D-glucosamine = di-trans,octa-cis-undecaprenyl diphospho-[N-acetyl-alpha-D-glucosaminyl-(1-&gt;4)]-N-acetyl-alpha-D-muramoyl-L-alanyl-D-glutamyl-meso-2,6-diaminopimeloyl-D-alanyl-D-alanine + UDP + H(+). It participates in cell wall biogenesis; peptidoglycan biosynthesis. In terms of biological role, cell wall formation. Catalyzes the transfer of a GlcNAc subunit on undecaprenyl-pyrophosphoryl-MurNAc-pentapeptide (lipid intermediate I) to form undecaprenyl-pyrophosphoryl-MurNAc-(pentapeptide)GlcNAc (lipid intermediate II). This chain is UDP-N-acetylglucosamine--N-acetylmuramyl-(pentapeptide) pyrophosphoryl-undecaprenol N-acetylglucosamine transferase, found in Vibrio parahaemolyticus serotype O3:K6 (strain RIMD 2210633).